Here is a 447-residue protein sequence, read N- to C-terminus: Vasoactive intestinal polypeptide receptor (447 aa).

The Extracellular portion of the chain corresponds to 1–103; the sequence is MCDVVNEIEL…VDDDSFFRSV (103 aa). Intrachain disulfides connect C15–C36, C27–C69, and C50–C86. N-linked (GlcNAc...) asparagine glycosylation is found at N17, N22, N64, and N91. Residues 104-128 traverse the membrane as a helical segment; the sequence is KIGYTIGHSVSLISLTTAIVILCMS. Residues 129 to 135 are Cytoplasmic-facing; that stretch reads RKLHCTR. A helical membrane pass occupies residues 136–155; the sequence is NYIHMHLFVSFILKAIAVFV. Residues 156-178 are Extracellular-facing; the sequence is KDAVLYDVIQESDNCSTASVGCK. Residue N169 is glycosylated (N-linked (GlcNAc...) asparagine). C177 and C247 are oxidised to a cystine. The chain crosses the membrane as a helical span at residues 179–202; the sequence is AVIVFFQYCIMASFFWLLVEGLYL. Residues 203–216 are Cytoplasmic-facing; sequence HALLAVSFFSERKY. Residues 217-238 traverse the membrane as a helical segment; the sequence is FWWYILIGWGGPTIFIMAWSFA. The Extracellular segment spans residues 239 to 256; the sequence is KAYFNDVGCWDIIENSDL. Residues 257 to 280 traverse the membrane as a helical segment; the sequence is FWWIIKTPILASILMNFILFICII. The Cytoplasmic segment spans residues 281-305; the sequence is RILRQKINCPDIGRNESNQYSRLAK. A helical membrane pass occupies residues 306 to 325; sequence STLLLIPLFGINFIIFAFIP. Residues 326-337 lie on the Extracellular side of the membrane; the sequence is ENIKTELRLVFD. The helical transmembrane segment at 338 to 357 threads the bilayer; it reads LILGSFQGFVVAVLYCFLNG. Topologically, residues 358 to 447 are cytoplasmic; sequence EVQAEIKRKW…KGHEDVREVS (90 aa).

This sequence belongs to the G-protein coupled receptor 2 family.

Its subcellular location is the cell membrane. Its function is as follows. This is a receptor for VIP. The activity of this receptor is mediated by G proteins which activate adenylyl cyclase. The chain is Vasoactive intestinal polypeptide receptor (vipr1) from Carassius auratus (Goldfish).